Here is a 285-residue protein sequence, read N- to C-terminus: Probable endonuclease 4 (285 aa).

His-69, His-109, Glu-145, Asp-179, His-182, His-216, Asp-229, His-231, and Glu-261 together coordinate Zn(2+).

This sequence belongs to the AP endonuclease 2 family. Zn(2+) is required as a cofactor.

It carries out the reaction Endonucleolytic cleavage to 5'-phosphooligonucleotide end-products.. Endonuclease IV plays a role in DNA repair. It cleaves phosphodiester bonds at apurinic or apyrimidinic (AP) sites, generating a 3'-hydroxyl group and a 5'-terminal sugar phosphate. The chain is Probable endonuclease 4 from Escherichia coli (strain SMS-3-5 / SECEC).